A 373-amino-acid polypeptide reads, in one-letter code: Methionine import ATP-binding protein MetN 1 (373 aa).

In terms of domain architecture, ABC transporter spans 29-270 (ILIDRVRKVY…PRHEVTRRFV (242 aa)). 67-74 (GRSGAGKS) provides a ligand contact to ATP.

The protein belongs to the ABC transporter superfamily. Methionine importer (TC 3.A.1.24) family. The complex is composed of two ATP-binding proteins (MetN), two transmembrane proteins (MetI) and a solute-binding protein (MetQ).

It localises to the cell inner membrane. The enzyme catalyses L-methionine(out) + ATP + H2O = L-methionine(in) + ADP + phosphate + H(+). It carries out the reaction D-methionine(out) + ATP + H2O = D-methionine(in) + ADP + phosphate + H(+). Its function is as follows. Part of the ABC transporter complex MetNIQ involved in methionine import. Responsible for energy coupling to the transport system. The chain is Methionine import ATP-binding protein MetN 1 from Rhodopseudomonas palustris (strain ATCC BAA-98 / CGA009).